A 308-amino-acid chain; its full sequence is MNPSTQIVVKMSNEELWKERYPNMEMISNSKRITPIFPEIKFKISGLEENSRYVLVLSLEKMDNIRYGINENKEWAPSSARKPKPHHNMKFFFHPEGTKLGKELMAETVEFTSVRITTSEKLSEKENVFYVHTMHKYVPVLTIRNLTTGEIASNIFKMEIAQFFPVSIYQQASMGRWKSDLNKHSTFGNRSEGGIKRKTSDAAGQLPSKRSSKKPVKKDVVDNSEVTLEVKTSQYLVNQNESNLTEYIPSSPLYSSQNQYQYPFHPYSPFDSSIPYPYSPMDYSYYFNPTFQSFSPENVYFDENRNPH.

A DNA-binding region (T-box) is located at residues 11 to 192 (MSNEELWKER…KHSTFGNRSE (182 aa)). The interval 186 to 220 (TFGNRSEGGIKRKTSDAAGQLPSKRSSKKPVKKDV) is disordered.

Its subcellular location is the nucleus. Functionally, involved in the regulatory network to control embryonic patterning and morphogenesis. Implicated in negatively regulating vab-7 expression at the anterior of embryos. The sequence is that of Putative T-box protein 30/42 (tbx-30) from Caenorhabditis elegans.